A 360-amino-acid chain; its full sequence is SPRY domain-containing SOCS box protein 3 (360 aa).

Residues 21–54 (DQDGRSPALHAEEEAWGYDSDGQHSNSDSDTDLL) form a disordered region. A B30.2/SPRY domain is found at 84–274 (SLHPFRQIKS…MKVIRSCCCR (191 aa)). The SOCS box domain maps to 264 to 315 (SMKVIRSCCCRTSLQYLCCARLRQLLPGSVDSLEVLPLPPGLKQVLSNKLGW). The interval 322 to 350 (NRSSQHKGDGSATTSCGSYSDSSCTPGHD) is disordered. Residues 332 to 346 (SATTSCGSYSDSSCT) are compositionally biased toward polar residues.

Belongs to the SPSB family. Substrate-recognition component of the ECS(SPSB3) complex, composed of spsb3, cul5, elob, elob and rnf7/rbx2.

It is found in the nucleus. Its pathway is protein modification; protein ubiquitination. In terms of biological role, substrate-recognition component of a cullin-5-RING E3 ubiquitin-protein ligase complex (ECS complex, also named CRL5 complex), which mediates the ubiquitination and subsequent proteasomal degradation of target proteins. This chain is SPRY domain-containing SOCS box protein 3 (spsb3), found in Xenopus laevis (African clawed frog).